Consider the following 217-residue polypeptide: Uridylate kinase (217 aa).

6-10 (KLSGR) is an ATP binding site. G38 serves as a coordination point for UMP. ATP is bound by residues G39 and R43. UMP-binding positions include D60 and 107–113 (FQPGQST). N134, Y139, and D142 together coordinate ATP.

It belongs to the UMP kinase family. As to quaternary structure, homohexamer.

It is found in the cytoplasm. It carries out the reaction UMP + ATP = UDP + ADP. Its pathway is pyrimidine metabolism; CTP biosynthesis via de novo pathway; UDP from UMP (UMPK route): step 1/1. Inhibited by UTP. Catalyzes the reversible phosphorylation of UMP to UDP. In Pyrobaculum neutrophilum (strain DSM 2338 / JCM 9278 / NBRC 100436 / V24Sta) (Thermoproteus neutrophilus), this protein is Uridylate kinase.